A 209-amino-acid chain; its full sequence is Pyridoxine/pyridoxamine 5'-phosphate oxidase (209 aa).

Residues 7–10 and Lys-64 each bind substrate; that span reads RADY. Residues 59-64, 74-75, and Lys-81 each bind FMN; these read RIVLLK and FT. Substrate-binding residues include Tyr-121, Arg-125, and Ser-129. FMN-binding positions include 138–139, Trp-182, and Arg-192; that span reads QS.

Belongs to the pyridoxamine 5'-phosphate oxidase family. In terms of assembly, homodimer. FMN is required as a cofactor.

It catalyses the reaction pyridoxamine 5'-phosphate + O2 + H2O = pyridoxal 5'-phosphate + H2O2 + NH4(+). The enzyme catalyses pyridoxine 5'-phosphate + O2 = pyridoxal 5'-phosphate + H2O2. It participates in cofactor metabolism; pyridoxal 5'-phosphate salvage; pyridoxal 5'-phosphate from pyridoxamine 5'-phosphate: step 1/1. Its pathway is cofactor metabolism; pyridoxal 5'-phosphate salvage; pyridoxal 5'-phosphate from pyridoxine 5'-phosphate: step 1/1. In terms of biological role, catalyzes the oxidation of either pyridoxine 5'-phosphate (PNP) or pyridoxamine 5'-phosphate (PMP) into pyridoxal 5'-phosphate (PLP). The protein is Pyridoxine/pyridoxamine 5'-phosphate oxidase of Haemophilus ducreyi (strain 35000HP / ATCC 700724).